The following is a 386-amino-acid chain: Caspase-12 (386 aa).

In terms of domain architecture, CARD spans 1 to 91 (MAGKRQSQDP…LLSLKSHAEN (91 aa)). S84 is modified (phosphoserine). Residues H218 and C266 contribute to the active site.

Belongs to the peptidase C14A family. As to quaternary structure, heterotetramer that consists of two anti-parallel arranged heterodimers, each one formed by two subunits (Potential). May interact with TRAF2.

Involved in the activation cascade of caspases responsible for apoptosis execution. The polypeptide is Caspase-12 (Canis lupus familiaris (Dog)).